Consider the following 999-residue polypeptide: Bifunctional glutamine synthetase adenylyltransferase/adenylyl-removing enzyme (999 aa).

The tract at residues 1-493 is adenylyl removase; the sequence is MFVRKPATER…LHAKLFYQPL (493 aa). Residues 498-999 form an adenylyl transferase region; that stretch reads GHTALGIGEG…KAVVRKIFGG (502 aa).

It belongs to the GlnE family. It depends on Mg(2+) as a cofactor.

The catalysed reaction is [glutamine synthetase]-O(4)-(5'-adenylyl)-L-tyrosine + phosphate = [glutamine synthetase]-L-tyrosine + ADP. It carries out the reaction [glutamine synthetase]-L-tyrosine + ATP = [glutamine synthetase]-O(4)-(5'-adenylyl)-L-tyrosine + diphosphate. Functionally, involved in the regulation of glutamine synthetase GlnA, a key enzyme in the process to assimilate ammonia. When cellular nitrogen levels are high, the C-terminal adenylyl transferase (AT) inactivates GlnA by covalent transfer of an adenylyl group from ATP to specific tyrosine residue of GlnA, thus reducing its activity. Conversely, when nitrogen levels are low, the N-terminal adenylyl removase (AR) activates GlnA by removing the adenylyl group by phosphorolysis, increasing its activity. The regulatory region of GlnE binds the signal transduction protein PII (GlnB) which indicates the nitrogen status of the cell. In Mycolicibacterium smegmatis (strain ATCC 700084 / mc(2)155) (Mycobacterium smegmatis), this protein is Bifunctional glutamine synthetase adenylyltransferase/adenylyl-removing enzyme.